Consider the following 456-residue polypeptide: Bifunctional protein GlmU (456 aa).

The segment at M1–R227 is pyrophosphorylase. UDP-N-acetyl-alpha-D-glucosamine contacts are provided by residues L8–G11, K22, Q73, G78–T79, Y100–D102, G137, E152, N167, and N225. A Mg(2+)-binding site is contributed by D102. N225 contacts Mg(2+). A linker region spans residues Q228–Q248. Residues G249–T456 are N-acetyltransferase. Residues R331 and K349 each contribute to the UDP-N-acetyl-alpha-D-glucosamine site. H361 serves as the catalytic Proton acceptor. UDP-N-acetyl-alpha-D-glucosamine-binding residues include Y364 and N375. Acetyl-CoA-binding positions include A378, N384–Y385, S403, A421, and R438.

This sequence in the N-terminal section; belongs to the N-acetylglucosamine-1-phosphate uridyltransferase family. It in the C-terminal section; belongs to the transferase hexapeptide repeat family. Homotrimer. It depends on Mg(2+) as a cofactor.

The protein localises to the cytoplasm. The enzyme catalyses alpha-D-glucosamine 1-phosphate + acetyl-CoA = N-acetyl-alpha-D-glucosamine 1-phosphate + CoA + H(+). It carries out the reaction N-acetyl-alpha-D-glucosamine 1-phosphate + UTP + H(+) = UDP-N-acetyl-alpha-D-glucosamine + diphosphate. It participates in nucleotide-sugar biosynthesis; UDP-N-acetyl-alpha-D-glucosamine biosynthesis; N-acetyl-alpha-D-glucosamine 1-phosphate from alpha-D-glucosamine 6-phosphate (route II): step 2/2. It functions in the pathway nucleotide-sugar biosynthesis; UDP-N-acetyl-alpha-D-glucosamine biosynthesis; UDP-N-acetyl-alpha-D-glucosamine from N-acetyl-alpha-D-glucosamine 1-phosphate: step 1/1. The protein operates within bacterial outer membrane biogenesis; LPS lipid A biosynthesis. Catalyzes the last two sequential reactions in the de novo biosynthetic pathway for UDP-N-acetylglucosamine (UDP-GlcNAc). The C-terminal domain catalyzes the transfer of acetyl group from acetyl coenzyme A to glucosamine-1-phosphate (GlcN-1-P) to produce N-acetylglucosamine-1-phosphate (GlcNAc-1-P), which is converted into UDP-GlcNAc by the transfer of uridine 5-monophosphate (from uridine 5-triphosphate), a reaction catalyzed by the N-terminal domain. The chain is Bifunctional protein GlmU from Idiomarina loihiensis (strain ATCC BAA-735 / DSM 15497 / L2-TR).